The following is an 801-amino-acid chain: Phenylalanine--tRNA ligase beta subunit (801 aa).

The 115-residue stretch at 39-153 (AEGLSKLVVG…EGAIPGDSIF (115 aa)) folds into the tRNA-binding domain. The region spanning 406 to 481 (TEPVEVSTTL…RIYGYEKLPT (76 aa)) is the B5 domain. 4 residues coordinate Mg(2+): Asp-459, Asp-465, Glu-468, and Glu-469. The FDX-ACB domain occupies 708 to 801 (TKYPSVSRDI…LVEKVNAEIR (94 aa)).

It belongs to the phenylalanyl-tRNA synthetase beta subunit family. Type 1 subfamily. In terms of assembly, tetramer of two alpha and two beta subunits. The cofactor is Mg(2+).

It localises to the cytoplasm. It catalyses the reaction tRNA(Phe) + L-phenylalanine + ATP = L-phenylalanyl-tRNA(Phe) + AMP + diphosphate + H(+). In Streptococcus agalactiae serotype V (strain ATCC BAA-611 / 2603 V/R), this protein is Phenylalanine--tRNA ligase beta subunit.